Here is a 201-residue protein sequence, read N- to C-terminus: Protein OPI10 homolog (201 aa).

Belongs to the OPI10 family.

In Anopheles gambiae (African malaria mosquito), this protein is Protein OPI10 homolog.